The chain runs to 931 residues: Semaphorin-6C (931 aa).

The first 25 residues, 1–25 (MPRAPHSMPLLLLLLLLSSLPQAQA), serve as a signal peptide directing secretion. Topologically, residues 26–605 (AFPQDPTPLL…ASASRSIPIP (580 aa)) are extracellular. The 487-residue stretch at 31-517 (PTPLLTSDLQ…FPGCIVYLSL (487 aa)) folds into the Sema domain. N-linked (GlcNAc...) asparagine glycosylation occurs at asparagine 71. Intrachain disulfides connect cysteine 112/cysteine 122, cysteine 140/cysteine 149, cysteine 263/cysteine 374, and cysteine 288/cysteine 333. N-linked (GlcNAc...) asparagine glycosylation is present at asparagine 287. An N-linked (GlcNAc...) asparagine glycan is attached at asparagine 438. 4 disulfide bridges follow: cysteine 480-cysteine 511, cysteine 520-cysteine 538, cysteine 526-cysteine 571, and cysteine 530-cysteine 546. The tract at residues 556–591 (DVDLTGNQESTEHGDCQDGATGSQSGPGDSAYGVRR) is disordered. Residues 606–626 (LLLACVAAAFALGASVSGLLV) form a helical membrane-spanning segment. Residues 627–931 (SCACRRANRR…PAPHGGHFNF (305 aa)) lie on the Cytoplasmic side of the membrane. Disordered regions lie at residues 655–747 (LARL…GGPA) and 777–931 (HGPQ…HFNF). Positions 693–708 (PPELACLPTPETTPEL) are enriched in low complexity. Basic and acidic residues predominate over residues 893–906 (PEGHRGRSLKRVDV). A compositionally biased stretch (pro residues) spans 911–923 (SPKPPLASPPQPA).

This sequence belongs to the semaphorin family.

The protein resides in the cell membrane. May be a stop signal for the dorsal root ganglion neurons in their target areas, and possibly also for other neurons. May also be involved in the maintenance and remodeling of neuronal connections. This chain is Semaphorin-6C (Sema6c), found in Mus musculus (Mouse).